The following is a 201-amino-acid chain: Cytochrome c4 (201 aa).

Positions M1 to A20 are cleaved as a signal peptide. Residues C34, C37, H38, M77, C130, C133, H134, and M178 each contribute to the heme c site.

Binds 2 heme c groups covalently per subunit.

It is found in the periplasm. Its function is as follows. Diheme, high potential cytochrome c believed to be an intermediate electron donor to terminal oxidation systems. This Pseudomonas aeruginosa (strain ATCC 15692 / DSM 22644 / CIP 104116 / JCM 14847 / LMG 12228 / 1C / PRS 101 / PAO1) protein is Cytochrome c4 (cc4).